Here is a 380-residue protein sequence, read N- to C-terminus: Homoserine O-acetyltransferase (380 aa).

An AB hydrolase-1 domain is found at 70–366 (NAVLVFHALT…SPHGHDAFLI (297 aa)). Ser186 (nucleophile) is an active-site residue. Residue Arg250 participates in substrate binding. Active-site residues include Asp333 and His361. Position 362 (Asp362) interacts with substrate.

It belongs to the AB hydrolase superfamily. MetX family. As to quaternary structure, homodimer.

It is found in the cytoplasm. It carries out the reaction L-homoserine + acetyl-CoA = O-acetyl-L-homoserine + CoA. It participates in amino-acid biosynthesis; L-methionine biosynthesis via de novo pathway; O-acetyl-L-homoserine from L-homoserine: step 1/1. Functionally, transfers an acetyl group from acetyl-CoA to L-homoserine, forming acetyl-L-homoserine. The chain is Homoserine O-acetyltransferase from Thermus thermophilus (strain ATCC BAA-163 / DSM 7039 / HB27).